Reading from the N-terminus, the 1240-residue chain is DNA polymerase II large subunit (1240 aa).

It belongs to the archaeal DNA polymerase II family. Heterodimer of a large subunit and a small subunit.

It catalyses the reaction DNA(n) + a 2'-deoxyribonucleoside 5'-triphosphate = DNA(n+1) + diphosphate. The enzyme catalyses Exonucleolytic cleavage in the 3'- to 5'-direction to yield nucleoside 5'-phosphates.. Possesses two activities: a DNA synthesis (polymerase) and an exonucleolytic activity that degrades single-stranded DNA in the 3'- to 5'-direction. Has a template-primer preference which is characteristic of a replicative DNA polymerase. This is DNA polymerase II large subunit from Methanopyrus kandleri (strain AV19 / DSM 6324 / JCM 9639 / NBRC 100938).